A 470-amino-acid chain; its full sequence is Poly(A) polymerase catalytic subunit (470 aa).

Active-site residues include D192 and D194.

The protein belongs to the poxviridae poly(A) polymerase catalytic subunit family. Heterodimer of a large (catalytic) subunit and a small (regulatory) subunit.

It carries out the reaction RNA(n) + ATP = RNA(n)-3'-adenine ribonucleotide + diphosphate. Its function is as follows. Polymerase that creates the 3'-poly(A) tail of mRNA's. This is Poly(A) polymerase catalytic subunit (PAPL) from Sus scrofa (Pig).